Reading from the N-terminus, the 284-residue chain is MASSWNNPAIFLAAALAVATAAQVVTAGFTTDLYWQQQPAPGAVTPYKTSDWHDGSATFYGDPSGMGDDFGGACGYVSNDIVSLYSTKTAALSTPLFADGNGCGQCYELRCVKSPWCNPGSPSVVITGTNLCPPNWYLPNDDGGWCNPPRHHFDMAPPSFLKLAQRVAGIVPVQYRRVPCQRTGGVRFCLQGNHYWLLLYVMNVGGAGDVSSLSVKTSGGGGAWIQAAHNWGITYQVFAALDNSDGLTVKLTTYSTPQQTIIVSDAISPWWITGLCYQGSNNFY.

A signal peptide spans 1–21 (MASSWNNPAIFLAAALAVATA). Residues 71-185 (GGACGYVSND…RRVPCQRTGG (115 aa)) enclose the Expansin-like EG45 domain. The region spanning 195 to 279 (YWLLLYVMNV…WWITGLCYQG (85 aa)) is the Expansin-like CBD domain.

It belongs to the expansin family. Expansin A subfamily. In terms of tissue distribution, expressed in roots.

The protein resides in the secreted. It localises to the cell wall. Its subcellular location is the membrane. May cause loosening and extension of plant cell walls by disrupting non-covalent bonding between cellulose microfibrils and matrix glucans. No enzymatic activity has been found. May be required for rapid internodal elongation in deepwater rice during submergence. In Oryza sativa subsp. japonica (Rice), this protein is Expansin-A17 (EXPA17).